The primary structure comprises 213 residues: Ras-related protein Rab-4B (213 aa).

A2 carries the post-translational modification N-acetylalanine. Positions 18, 19, 20, 21, 22, and 23 each coordinate GDP. GTP contacts are provided by G18, T19, G20, K21, S22, C23, S37, H39, and T40. Position 22 (S22) interacts with Mg(2+). Residues 39–44 carry the Switch 1 motif; it reads HTIGVE. T40 and D63 together coordinate Mg(2+). Residues 65–74 carry the Switch 2 motif; the sequence is AGQERFRSVT. G66 contributes to the GTP binding site. The residue at position 67 (Q67) is a 5-glutamyl serotonin. GDP contacts are provided by N121, K122, D124, A152, and L153. Residues N121, K122, D124, A152, and L153 each coordinate GTP. Phosphoserine occurs at positions 185 and 193. Residues C211 and C213 are each lipidated (S-geranylgeranyl cysteine). A Cysteine methyl ester modification is found at C213.

The protein belongs to the small GTPase superfamily. Rab family. As to quaternary structure, interacts (GTP-bound form) with RUFY1; the interaction allows endosomal tethering and fusion. It depends on Mg(2+) as a cofactor. In terms of processing, serotonylation of Gln-67 by TGM2 during activation and aggregation of platelets leads to constitutive activation of GTPase activity.

It localises to the cell membrane. The protein localises to the early endosome membrane. It catalyses the reaction GTP + H2O = GDP + phosphate + H(+). Regulated by guanine nucleotide exchange factors (GEFs) which promote the exchange of bound GDP for free GTP. Regulated by GTPase activating proteins (GAPs) which increase the GTP hydrolysis activity. Inhibited by GDP dissociation inhibitors (GDIs). Its function is as follows. The small GTPases Rab are key regulators of intracellular membrane trafficking, from the formation of transport vesicles to their fusion with membranes. Rabs cycle between an inactive GDP-bound form and an active GTP-bound form that is able to recruit to membranes different set of downstream effectors directly responsible for vesicle formation, movement, tethering and fusion. RAB4B mediates endosomal tethering and fusion through the interaction with RUFY1 and RAB14. Acts as a regulator of platelet alpha-granule release during activation and aggregation of platelets. This Homo sapiens (Human) protein is Ras-related protein Rab-4B.